A 481-amino-acid polypeptide reads, in one-letter code: RAC-beta serine/threonine-protein kinase (481 aa).

Methionine 1 bears the N-acetylmethionine mark. The PH domain occupies 5 to 108 (SVIKEGWLHK…WMRAIQMVAN (104 aa)). Phosphoserine is present on serine 34. Cysteine 60 and cysteine 77 are disulfide-bonded. Serine 126 bears the Phosphoserine mark. Residues serine 128 and serine 131 are each glycosylated (O-linked (GlcNAc) serine). Positions 152 to 409 (FDYLKLLGKG…AKEVMEHRFF (258 aa)) constitute a Protein kinase domain. ATP-binding positions include 158 to 166 (LGKGTFGKV) and lysine 181. Catalysis depends on aspartate 275, which acts as the Proton acceptor. The Mn(2+) site is built by asparagine 280 and aspartate 293. A disulfide bond links cysteine 297 and cysteine 311. Threonine 306 carries an O-linked (GlcNAc) threonine glycan. Residue threonine 309 is modified to Phosphothreonine; by PDPK1. A glycan (O-linked (GlcNAc) threonine) is linked at threonine 313. Positions 410–481 (LSINWQDVVQ…QFSYSASIRE (72 aa)) constitute an AGC-kinase C-terminal domain. Serine 447 is modified (phosphoserine). Threonine 451 bears the Phosphothreonine mark. A phosphoserine mark is found at serine 474 and serine 478. O-linked (GlcNAc) serine; alternate glycosylation is present at serine 474.

Belongs to the protein kinase superfamily. AGC Ser/Thr protein kinase family. RAC subfamily. In terms of assembly, interacts with BTBD10. Interacts with KCTD20. Interacts (via PH domain) with MTCP1, TCL1A and TCL1B; this interaction may facilitate AKT2 oligomerization and phosphorylation, hence increasing kinase activity. Interacts with PHB2; this interaction may be important for myogenic differentiation. Interacts (when phosphorylated) with CLIP3/ClipR-59; this interaction promotes AKT2 recruitment to the plasma membrane. Interacts with WDFY2/ProF (via WD repeats 1-3). In terms of processing, phosphorylation on Thr-309 and Ser-474 is required for full activity. Phosphorylation of the activation loop at Thr-309 by PDPK1/PDK1 is a prerequisite for full activation. Phosphorylated and activated by PDPK1/PDK1 in the presence of phosphatidylinositol 3,4,5-trisphosphate. Phosphorylation by mTORC2 in response to growth factors plays a key role in AKT1 activation: mTORC2 phosphorylates different sites depending on the context, such as Ser-474 or Ser-478, thereby facilitating subsequent phosphorylation of the activation loop by PDPK1/PDK1. Ubiquitinated; undergoes both 'Lys-48'- and 'Lys-63'-linked polyubiquitination. TRAF6 catalyzes 'Lys-63'-linked AKT2 ubiquitination; this modification may be important for AKT2 recruitment to the plasma membrane and for AKT2 activating phosphorylation. When phosphorylated, undergoes 'Lys-48'-polyubiquitination catalyzed by TTC3 in the nucleus, leading to its degradation by the proteasome. Post-translationally, O-GlcNAcylation at Thr-306 and Thr-313 inhibits activating phosphorylation at Thr-309 via the disruption of the interaction between AKT and PDPK1/PDK1. In terms of tissue distribution, widely expressed. Expressed in myoblasts.

The protein resides in the cytoplasm. The protein localises to the nucleus. It localises to the cell membrane. Its subcellular location is the early endosome. It catalyses the reaction L-seryl-[protein] + ATP = O-phospho-L-seryl-[protein] + ADP + H(+). The catalysed reaction is L-threonyl-[protein] + ATP = O-phospho-L-threonyl-[protein] + ADP + H(+). Its activity is regulated as follows. Phosphorylation at Thr-309 (in the kinase domain) and Ser-474 (in the C-terminal regulatory region) is required for full activation. In adipocytes and hepatocytes, the activation is induced by insulin. Aminofurazans, such as 4-[2-(4-amino-2,5-dihydro-1,2,5-oxadiazol-3-yl)-6-{[(1S)-3-amino-1-phenylpropyl]oxy}-1-ethyl-1H-imidazo[4,5-c]pyridin-4-yl]-2-methylbut-3-yn-2-ol (compound 32), are potent AKT2 inhibitors. AKT2 phosphorylation of PKP1 is induced by insulin. Serine/threonine kinase closely related to AKT1 and AKT3. All 3 enzymes, AKT1, AKT2 and AKT3, are collectively known as AKT kinase. AKT regulates many processes including metabolism, proliferation, cell survival, growth and angiogenesis, through the phosphorylation of a range of downstream substrates. Over 100 substrates have been reported so far, although for most of them, the precise AKT kinase catalyzing the reaction was not specified. AKT regulates glucose uptake by mediating insulin-induced translocation of the SLC2A4/GLUT4 glucose transporter to the cell surface. Phosphorylation of PTPN1 at 'Ser-50' negatively modulates its phosphatase activity preventing dephosphorylation of the insulin receptor and the attenuation of insulin signaling. Phosphorylation of TBC1D4 triggers the binding of this effector to inhibitory 14-3-3 proteins, which is required for insulin-stimulated glucose transport. AKT also regulates the storage of glucose in the form of glycogen by phosphorylating GSK3A at 'Ser-21' and GSK3B at 'Ser-9', resulting in inhibition of its kinase activity. Phosphorylation of GSK3 isoforms by AKT is also thought to be one mechanism by which cell proliferation is driven. AKT also regulates cell survival via the phosphorylation of MAP3K5 (apoptosis signal-related kinase). Phosphorylation of 'Ser-83' decreases MAP3K5 kinase activity stimulated by oxidative stress and thereby prevents apoptosis. AKT mediates insulin-stimulated protein synthesis by phosphorylating TSC2 at 'Ser-939' and 'Thr-1462', thereby activating mTORC1 signaling and leading to both phosphorylation of 4E-BP1 and in activation of RPS6KB1. AKT is involved in the phosphorylation of members of the FOXO factors (Forkhead family of transcription factors), leading to binding of 14-3-3 proteins and cytoplasmic localization. In particular, FOXO1 is phosphorylated at 'Thr-24', 'Ser-256' and 'Ser-319'. FOXO3 and FOXO4 are phosphorylated on equivalent sites. AKT has an important role in the regulation of NF-kappa-B-dependent gene transcription and positively regulates the activity of CREB1 (cyclic AMP (cAMP)-response element binding protein). The phosphorylation of CREB1 induces the binding of accessory proteins that are necessary for the transcription of pro-survival genes such as BCL2 and MCL1. AKT phosphorylates 'Ser-454' on ATP citrate lyase (ACLY), thereby potentially regulating ACLY activity and fatty acid synthesis. Activates the 3B isoform of cyclic nucleotide phosphodiesterase (PDE3B) via phosphorylation of 'Ser-273', resulting in reduced cyclic AMP levels and inhibition of lipolysis. Phosphorylates PIKFYVE on 'Ser-318', which results in increased PI(3)P-5 activity. The Rho GTPase-activating protein DLC1 is another substrate and its phosphorylation is implicated in the regulation cell proliferation and cell growth. AKT plays a role as key modulator of the AKT-mTOR signaling pathway controlling the tempo of the process of newborn neurons integration during adult neurogenesis, including correct neuron positioning, dendritic development and synapse formation. Signals downstream of phosphatidylinositol 3-kinase (PI(3)K) to mediate the effects of various growth factors such as platelet-derived growth factor (PDGF), epidermal growth factor (EGF), insulin and insulin-like growth factor 1 (IGF1). AKT mediates the antiapoptotic effects of IGF1. Essential for the SPATA13-mediated regulation of cell migration and adhesion assembly and disassembly. May be involved in the regulation of the placental development. In response to lysophosphatidic acid stimulation, inhibits the ciliogenesis cascade. In this context, phosphorylates WDR44, hence stabilizing its interaction with Rab11 and preventing the formation of the ciliogenic Rab11-FIP3-RAB3IP complex. Also phosphorylates RAB3IP/Rabin8, thus may affect RAB3IP guanine nucleotide exchange factor (GEF) activity toward Rab8, which is important for cilia growth. Phosphorylates PKP1, facilitating its interaction with YWHAG and translocation to the nucleus, ultimately resulting in a reduction in keratinocyte intercellular adhesion. Phosphorylation of PKP1 increases PKP1 protein stability, translocation to the cytoplasm away from desmosome plaques and PKP1-driven cap-dependent translation. In terms of biological role, several AKT2-specific substrates have been identified, including ANKRD2, C2CD5, CLK2 and PITX2. May play a role in myoblast differentiation. In this context, may act through PITX2 phosphorylation. Unphosphorylated PITX2 associates with an ELAVL1/HuR-containing complex, which stabilizes CCND1 cyclin mRNA, ensuring cell proliferation. Phosphorylation by AKT2 impairs this association, leading to CCND1 mRNA destabilization and progression towards differentiation. Also involved in the negative regulation of myogenesis in response to stress conditions. In this context, acts by phosphorylating ANKRD2. May also be a key regulator of glucose uptake. Regulates insulin-stimulated glucose transport by the increase of glucose transporter GLUT4 translocation from intracellular stores to the plasma membrane. In this context, acts by phosphorylating C2CD5/CDP138 on 'Ser-197' in insulin-stimulated adipocytes. Through the phosphorylation of CLK2 on 'Thr-343', involved in insulin-regulated suppression of hepatic gluconeogenesis. In Homo sapiens (Human), this protein is RAC-beta serine/threonine-protein kinase.